Reading from the N-terminus, the 95-residue chain is Aspartyl/glutamyl-tRNA(Asn/Gln) amidotransferase subunit C (95 aa).

It belongs to the GatC family. In terms of assembly, heterotrimer of A, B and C subunits.

It catalyses the reaction L-glutamyl-tRNA(Gln) + L-glutamine + ATP + H2O = L-glutaminyl-tRNA(Gln) + L-glutamate + ADP + phosphate + H(+). It carries out the reaction L-aspartyl-tRNA(Asn) + L-glutamine + ATP + H2O = L-asparaginyl-tRNA(Asn) + L-glutamate + ADP + phosphate + 2 H(+). Functionally, allows the formation of correctly charged Asn-tRNA(Asn) or Gln-tRNA(Gln) through the transamidation of misacylated Asp-tRNA(Asn) or Glu-tRNA(Gln) in organisms which lack either or both of asparaginyl-tRNA or glutaminyl-tRNA synthetases. The reaction takes place in the presence of glutamine and ATP through an activated phospho-Asp-tRNA(Asn) or phospho-Glu-tRNA(Gln). The polypeptide is Aspartyl/glutamyl-tRNA(Asn/Gln) amidotransferase subunit C (Desulfosudis oleivorans (strain DSM 6200 / JCM 39069 / Hxd3) (Desulfococcus oleovorans)).